Consider the following 115-residue polypeptide: uncharacterized protein (115 aa).

This is an uncharacterized protein from Bacillus subtilis (strain 168).